The chain runs to 81 residues: Costars family protein ABRACL (81 aa).

The residue at position 1 (M1) is an N-acetylmethionine.

The protein belongs to the costars family.

This Bos taurus (Bovine) protein is Costars family protein ABRACL (ABRACL).